Here is a 404-residue protein sequence, read N- to C-terminus: Phosphopentomutase (404 aa).

Mn(2+) is bound by residues D10, D303, H308, D344, H345, and H356.

This sequence belongs to the phosphopentomutase family. Mn(2+) is required as a cofactor.

Its subcellular location is the cytoplasm. The catalysed reaction is 2-deoxy-alpha-D-ribose 1-phosphate = 2-deoxy-D-ribose 5-phosphate. It carries out the reaction alpha-D-ribose 1-phosphate = D-ribose 5-phosphate. It functions in the pathway carbohydrate degradation; 2-deoxy-D-ribose 1-phosphate degradation; D-glyceraldehyde 3-phosphate and acetaldehyde from 2-deoxy-alpha-D-ribose 1-phosphate: step 1/2. Isomerase that catalyzes the conversion of deoxy-ribose 1-phosphate (dRib-1-P) and ribose 1-phosphate (Rib-1-P) to deoxy-ribose 5-phosphate (dRib-5-P) and ribose 5-phosphate (Rib-5-P), respectively. The protein is Phosphopentomutase of Shewanella sp. (strain MR-4).